The following is a 372-amino-acid chain: Phospho-2-dehydro-3-deoxyheptonate aldolase, tyrosine-inhibited (372 aa).

Belongs to the class-I DAHP synthase family.

The protein resides in the cytoplasm. It localises to the nucleus. It catalyses the reaction D-erythrose 4-phosphate + phosphoenolpyruvate + H2O = 7-phospho-2-dehydro-3-deoxy-D-arabino-heptonate + phosphate. The protein operates within metabolic intermediate biosynthesis; chorismate biosynthesis; chorismate from D-erythrose 4-phosphate and phosphoenolpyruvate: step 1/7. Stereospecific condensation of phosphoenolpyruvate (PEP) and D-erythrose-4-phosphate (E4P) giving rise to 3-deoxy-D-arabino-heptulosonate-7-phosphate (DAHP). The chain is Phospho-2-dehydro-3-deoxyheptonate aldolase, tyrosine-inhibited (aro4) from Schizosaccharomyces pombe (strain 972 / ATCC 24843) (Fission yeast).